A 1083-amino-acid chain; its full sequence is DNA-directed RNA polymerase subunit beta (1083 aa).

The protein belongs to the RNA polymerase beta chain family. In terms of assembly, in plastids the minimal PEP RNA polymerase catalytic core is composed of four subunits: alpha, beta, beta', and beta''. When a (nuclear-encoded) sigma factor is associated with the core the holoenzyme is formed, which can initiate transcription.

Its subcellular location is the plastid. The protein localises to the chloroplast. The enzyme catalyses RNA(n) + a ribonucleoside 5'-triphosphate = RNA(n+1) + diphosphate. Its function is as follows. DNA-dependent RNA polymerase catalyzes the transcription of DNA into RNA using the four ribonucleoside triphosphates as substrates. This chain is DNA-directed RNA polymerase subunit beta, found in Acorus calamus var. americanus (American sweet flag).